Reading from the N-terminus, the 381-residue chain is Succinate--CoA ligase [ADP-forming] subunit beta (381 aa).

The 228-residue stretch at 9–236 folds into the ATP-grasp domain; it reads KELLRVAGVP…ESSEAPSEVD (228 aa). ATP contacts are provided by residues lysine 45, 52-54, alanine 94, and glutamate 99; that span reads GRG. Positions 191 and 205 each coordinate Mg(2+). Substrate-binding positions include asparagine 256 and 313 to 315; that span reads GIT.

Belongs to the succinate/malate CoA ligase beta subunit family. In terms of assembly, heterotetramer of two alpha and two beta subunits. It depends on Mg(2+) as a cofactor.

It catalyses the reaction succinate + ATP + CoA = succinyl-CoA + ADP + phosphate. It carries out the reaction GTP + succinate + CoA = succinyl-CoA + GDP + phosphate. The protein operates within carbohydrate metabolism; tricarboxylic acid cycle; succinate from succinyl-CoA (ligase route): step 1/1. Its function is as follows. Succinyl-CoA synthetase functions in the citric acid cycle (TCA), coupling the hydrolysis of succinyl-CoA to the synthesis of either ATP or GTP and thus represents the only step of substrate-level phosphorylation in the TCA. The beta subunit provides nucleotide specificity of the enzyme and binds the substrate succinate, while the binding sites for coenzyme A and phosphate are found in the alpha subunit. The sequence is that of Succinate--CoA ligase [ADP-forming] subunit beta from Gemmatimonas aurantiaca (strain DSM 14586 / JCM 11422 / NBRC 100505 / T-27).